A 194-amino-acid polypeptide reads, in one-letter code: Peptidyl-tRNA hydrolase (194 aa).

Tyrosine 17 contributes to the tRNA binding site. Catalysis depends on histidine 22, which acts as the Proton acceptor. TRNA-binding residues include tyrosine 68, asparagine 70, and asparagine 116.

It belongs to the PTH family. In terms of assembly, monomer.

The protein resides in the cytoplasm. The catalysed reaction is an N-acyl-L-alpha-aminoacyl-tRNA + H2O = an N-acyl-L-amino acid + a tRNA + H(+). In terms of biological role, hydrolyzes ribosome-free peptidyl-tRNAs (with 1 or more amino acids incorporated), which drop off the ribosome during protein synthesis, or as a result of ribosome stalling. Functionally, catalyzes the release of premature peptidyl moieties from peptidyl-tRNA molecules trapped in stalled 50S ribosomal subunits, and thus maintains levels of free tRNAs and 50S ribosomes. This chain is Peptidyl-tRNA hydrolase, found in Azotobacter vinelandii (strain DJ / ATCC BAA-1303).